The chain runs to 34 residues: Brevinin-2Ec (34 aa).

C28 and C34 are disulfide-bonded.

Belongs to the frog skin active peptide (FSAP) family. Brevinin subfamily. In terms of tissue distribution, expressed by the skin glands.

The protein localises to the secreted. Functionally, shows antibacterial activity against representative Gram-negative and Gram-positive bacterial species, and hemolytic activity. The sequence is that of Brevinin-2Ec from Pelophylax lessonae (Pool frog).